A 474-amino-acid chain; its full sequence is Synaptotagmin-17 (474 aa).

Positions 60 to 112 (WLMASRSSDKDGDSVHTASEVPLTPRTNSPDGRRSSSDTSKSTYSLTRRISSL) are disordered. Over residues 96–112 (SDTSKSTYSLTRRISSL) the composition is skewed to low complexity. 2 positions are modified to phosphoserine: Ser-118 and Ser-119. 2 C2 domains span residues 184 to 310 (QLGM…HWWK) and 321 to 455 (ELGE…EQWH).

This sequence belongs to the synaptotagmin family. As to expression, expressed abundantly in brain (frontal and temporal lobes, hippocampus, hypothalamus, amygdala, substantia nigra, and pituitary), kidney, and prostate. Expressed in fetal brain, kidney and lung. Expressed in melanocytes.

It localises to the membrane. In terms of biological role, plays a role in dendrite formation by melanocytes. In Homo sapiens (Human), this protein is Synaptotagmin-17 (SYT17).